The chain runs to 147 residues: DNA polymerase III subunit chi (147 aa).

This sequence belongs to the DNA polymerase III chi/HolC chain family. The DNA polymerase III holoenzyme complex contains at least 10 different subunits organized into 3 functionally essential subassemblies: the Pol III core, the beta sliding clamp processivity factor and the clamp-loading complex. The Pol III core (subunits alpha, epsilon and theta) contains the polymerase and the 3'-5' exonuclease proofreading activities. The polymerase is tethered to the template via the dimeric beta sliding clamp processivity factor. The clamp-loading complex (also called gamma complex) assembles the beta sliding clamp onto the primed template and plays a central role in the organization and communication at the replication fork. The clamp-loading complex contains delta, delta', psi and chi, and 3 copies of either or both of two different DnaX proteins, gamma and tau. The DNA replisome complex has a single clamp loader (3 tau and 1 each of delta, delta', psi and chi subunits) which binds 3 Pol III cores (1 core on the leading strand and 2 on the lagging strand) each with a beta sliding clamp dimer. Additional proteins in the replisome are other copies of gamma, psi (holD) and chi (this protein), SSB, DNA helicase and RNA primase. The clamp loader hydrolyzes ATP to assemble the beta processivity factor onto the primed template and plays a central role in the organization and communication at the replication fork. The only subunit of the DNA polymerase III holoenzyme known to interact with single-stranded DNA binding protein (SSB). Interacts directly with the psi subunit (holD). Interacts directly with DNA helicase YoaA. It binds to HolD and YoaA, but not both simultaneously.

The enzyme catalyses DNA(n) + a 2'-deoxyribonucleoside 5'-triphosphate = DNA(n+1) + diphosphate. Part of the beta sliding clamp loading complex, which hydrolyzes ATP to load the beta clamp onto primed DNA to form the DNA replication pre-initiation complex. DNA polymerase III is a complex, multichain enzyme responsible for most of the replicative synthesis in bacteria. This DNA polymerase also exhibits 3' to 5' exonuclease activity. Genetically identified as involved in the repair of replication forks and tolerance of the chain-terminating nucleoside analog 3' AZT. This subunit may stabilize YoaA and/or stimulate the helicase activity of YoaA. This Escherichia coli (strain K12) protein is DNA polymerase III subunit chi.